The chain runs to 480 residues: Serine carboxypeptidase-like 35 (480 aa).

The first 20 residues, 1–20, serve as a signal peptide directing secretion; that stretch reads MKKNALWLLCILVLPAIACG. Asn-79 and Asn-146 each carry an N-linked (GlcNAc...) asparagine glycan. Disulfide bonds link Cys-95-Cys-363, Cys-257-Cys-270, and Cys-294-Cys-331. Ser-188 is a catalytic residue. N-linked (GlcNAc...) asparagine glycosylation is present at Asn-265. N-linked (GlcNAc...) asparagine glycosylation occurs at Asn-352. Residues Asp-399 and His-452 contribute to the active site.

This sequence belongs to the peptidase S10 family. In terms of tissue distribution, expressed in seedlings, flowers and siliques.

It is found in the secreted. Its function is as follows. Probable carboxypeptidase. The sequence is that of Serine carboxypeptidase-like 35 (SCPL35) from Arabidopsis thaliana (Mouse-ear cress).